We begin with the raw amino-acid sequence, 98 residues long: Large ribosomal subunit protein bL25 (98 aa).

The tract at residues 1–23 (MANFVLNAQARAEDKQGKGASRR) is disordered.

The protein belongs to the bacterial ribosomal protein bL25 family. As to quaternary structure, part of the 50S ribosomal subunit; part of the 5S rRNA/L5/L18/L25 subcomplex. Contacts the 5S rRNA. Binds to the 5S rRNA independently of L5 and L18.

Functionally, this is one of the proteins that binds to the 5S RNA in the ribosome where it forms part of the central protuberance. This is Large ribosomal subunit protein bL25 from Acinetobacter baumannii (strain ATCC 17978 / DSM 105126 / CIP 53.77 / LMG 1025 / NCDC KC755 / 5377).